Reading from the N-terminus, the 316-residue chain is Olfactory receptor 56B2 (316 aa).

The Extracellular segment spans residues 1–32 (MVLQELRDSNSSKFQVSEFILMGFPGIHSWQH). N-linked (GlcNAc...) asparagine glycosylation occurs at asparagine 10. Residues 33–53 (WLSLPLALLYLLALSANILIL) traverse the membrane as a helical segment. Residues 54–61 (IIINKEAA) are Cytoplasmic-facing. Residues 62-82 (LHQPMYYFLGILAMADIGLAT) traverse the membrane as a helical segment. The Extracellular portion of the chain corresponds to 83–106 (TIMPKILAILWFNAKTISLLECFA). A disulfide bond links cysteine 104 and cysteine 196. The helical transmembrane segment at 107 to 127 (QMYAIHCFVAMESSTFVCMAI) threads the bilayer. Over 128–146 (DRYVAICRPLRYPSIITES) the chain is Cytoplasmic. A helical membrane pass occupies residues 147-167 (FVFKANGFMALRNSLCLISVP). The Extracellular portion of the chain corresponds to 168–203 (LLAAQRHYCSQNQIEHCLCSNLGVTSLSCDDRRINS). Residues 204–224 (INQVLLAWTLMGSDLGLIILS) traverse the membrane as a helical segment. Residues 225–244 (YALILYSVLKLNSPEAASKA) are Cytoplasmic-facing. A helical membrane pass occupies residues 245–265 (LSTCTSHLILILFFYTVIIVI). Residues 266-279 (SITRSTGMRVPLIP) are Extracellular-facing. A helical membrane pass occupies residues 280-300 (VLLNVLHNVIPPALNPMVYAL). At 301–316 (KNKELRQGLYKVLRLE) the chain is on the cytoplasmic side.

Belongs to the G-protein coupled receptor 1 family.

The protein resides in the cell membrane. In terms of biological role, odorant receptor. This chain is Olfactory receptor 56B2, found in Homo sapiens (Human).